The chain runs to 397 residues: Phosphoglycerate kinase (397 aa).

Substrate is bound by residues 21–23 (DFN), R37, 60–63 (HLGR), R119, and R152. Residues K203, G294, E325, and 354–357 (GGDS) each bind ATP.

The protein belongs to the phosphoglycerate kinase family. Monomer.

The protein localises to the cytoplasm. The enzyme catalyses (2R)-3-phosphoglycerate + ATP = (2R)-3-phospho-glyceroyl phosphate + ADP. It participates in carbohydrate degradation; glycolysis; pyruvate from D-glyceraldehyde 3-phosphate: step 2/5. The protein is Phosphoglycerate kinase of Pelodictyon phaeoclathratiforme (strain DSM 5477 / BU-1).